Reading from the N-terminus, the 580-residue chain is MTNHEQVLTDYLAAFIEELVQAGVKEAIISPGSRSTPLALMMAEHPILKIYVDVDERSAGFFALGLAKASKRPVVLLSTSGTAAANYFPAIAEANLSQIPLIILTADRPHELRNVGAPQAMDQLHLYGSHVKDFTDMALPENSDEMLRYAKWHGSRAVDIAMKTPRGPVHLNFPLREPLVPILEPSPYTATGKKHHHVHIYYTHEVLDDSSIQKMVTDCTGKKGVFVVGPIDKKEIEQPMVDLAKKLGWPILADPLSGLRSYGAKDDVVIDQYDAFLKEAAIWDNLTPEVVIRFGSMPVSKPLKNWLEQLSDIRFYVVDPGAAWKDPIKAVTDMIHCDERFLLDIMQKNMPDDTKISAWLNRWTAYNQTAREIVLTEMENTTTLEEGKIVAELRRLLPDKAGLFIGNSMPIRDVDTYFSQIDKKIKMLANRGANGIDGVVSSALGASVVFQPMFLLIGDLSFYHDMNGLLMAKKYKMNLTIIIVNNDGGGIFSFLPQAKEPKYFESLFGTSTELDFRFAAAFYDGDYHEAKSVDELEEAVDKATYHKGLDIIEVKTNRHENKANHQALWDKIATGLKALD.

This sequence belongs to the TPP enzyme family. MenD subfamily. In terms of assembly, homodimer. Requires Mg(2+) as cofactor. Mn(2+) serves as cofactor. Thiamine diphosphate is required as a cofactor.

The catalysed reaction is isochorismate + 2-oxoglutarate + H(+) = 5-enolpyruvoyl-6-hydroxy-2-succinyl-cyclohex-3-ene-1-carboxylate + CO2. It functions in the pathway quinol/quinone metabolism; 1,4-dihydroxy-2-naphthoate biosynthesis; 1,4-dihydroxy-2-naphthoate from chorismate: step 2/7. The protein operates within quinol/quinone metabolism; menaquinone biosynthesis. Functionally, catalyzes the thiamine diphosphate-dependent decarboxylation of 2-oxoglutarate and the subsequent addition of the resulting succinic semialdehyde-thiamine pyrophosphate anion to isochorismate to yield 2-succinyl-5-enolpyruvyl-6-hydroxy-3-cyclohexene-1-carboxylate (SEPHCHC). The chain is 2-succinyl-5-enolpyruvyl-6-hydroxy-3-cyclohexene-1-carboxylate synthase from Listeria welshimeri serovar 6b (strain ATCC 35897 / DSM 20650 / CCUG 15529 / CIP 8149 / NCTC 11857 / SLCC 5334 / V8).